Here is a 39-residue protein sequence, read N- to C-terminus: Omega-theraphotoxin-Ba1a (39 aa).

3 disulfide bridges follow: Cys-4–Cys-25, Cys-8–Cys-31, and Cys-17–Cys-36.

This sequence belongs to the neurotoxin 12 (Hwtx-2) family. 06 (TXP1) subfamily. In terms of tissue distribution, expressed by the venom gland.

It localises to the secreted. Inhibits voltage-gated calcium channels (Cav) in rat cerebellar granule cells. Has insecticidal activity to crickets (Acheta domesticus). Is not toxic to mice. The polypeptide is Omega-theraphotoxin-Ba1a (Brachypelma albiceps (Mexican golden redrump tarantula)).